The chain runs to 89 residues: Small ribosomal subunit protein uS17 (89 aa).

It belongs to the universal ribosomal protein uS17 family. Part of the 30S ribosomal subunit.

Functionally, one of the primary rRNA binding proteins, it binds specifically to the 5'-end of 16S ribosomal RNA. In Chlorobium phaeobacteroides (strain BS1), this protein is Small ribosomal subunit protein uS17.